A 181-amino-acid polypeptide reads, in one-letter code: Cell division protein ZapC (181 aa).

The protein belongs to the ZapC family. Interacts directly with FtsZ.

It is found in the cytoplasm. Functionally, contributes to the efficiency of the cell division process by stabilizing the polymeric form of the cell division protein FtsZ. Acts by promoting interactions between FtsZ protofilaments and suppressing the GTPase activity of FtsZ. This is Cell division protein ZapC from Shewanella woodyi (strain ATCC 51908 / MS32).